The chain runs to 659 residues: Cysteine-rich receptor-like protein kinase 18 (659 aa).

The N-terminal stretch at Met1–Ala27 is a signal peptide. Gnk2-homologous domains are found at residues Gln28–Phe131 and Met137–Phe250. The Extracellular portion of the chain corresponds to Gln28 to Lys287. Residues Asn32, Asn57, Asn152, Asn162, Asn179, Asn180, Asn197, Asn275, and Asn279 are each glycosylated (N-linked (GlcNAc...) asparagine). A helical transmembrane segment spans residues Ile288–Ile308. The Cytoplasmic segment spans residues Ser309–Arg659. The Protein kinase domain maps to Phe339 to Leu611. Residues Leu345 to Val353 and Lys367 each bind ATP. The residue at position 412 (Tyr412) is a Phosphotyrosine. Asp464 functions as the Proton acceptor in the catalytic mechanism. At Ser468 the chain carries Phosphoserine. At Thr504 the chain carries Phosphothreonine. Phosphotyrosine is present on Tyr512.

This sequence belongs to the protein kinase superfamily. Ser/Thr protein kinase family. CRK subfamily.

It is found in the membrane. The catalysed reaction is L-seryl-[protein] + ATP = O-phospho-L-seryl-[protein] + ADP + H(+). It catalyses the reaction L-threonyl-[protein] + ATP = O-phospho-L-threonyl-[protein] + ADP + H(+). The polypeptide is Cysteine-rich receptor-like protein kinase 18 (CRK18) (Arabidopsis thaliana (Mouse-ear cress)).